The chain runs to 662 residues: Rap guanine nucleotide exchange factor-like 1 (662 aa).

The interval 1–149 (MKPLEKFLKK…PPWAPLGAPE (149 aa)) is disordered. Over residues 20–48 (VAGGPGGGLGSCGGPGGGGGPGGGGGPAG) the composition is skewed to gly residues. Over residues 49–64 (GQRSLQRRQSVSRLLL) the composition is skewed to low complexity. The segment covering 73–82 (AEPGLEPPVP) has biased composition (pro residues). The segment covering 120–135 (LRSPSSYSSDELSPGE) has biased composition (low complexity). The region spanning 424–660 (EPEDVANHLT…FELSYKLEAN (237 aa)) is the Ras-GEF domain.

Functionally, probable guanine nucleotide exchange factor (GEF). The protein is Rap guanine nucleotide exchange factor-like 1 (RAPGEFL1) of Homo sapiens (Human).